A 449-amino-acid polypeptide reads, in one-letter code: Procollagen C-endopeptidase enhancer 1 (449 aa).

Residues 1–25 (MLPAATASLLGPLLTACALLPFAQG) form the signal peptide. Asn-29 is a glycosylation site (N-linked (GlcNAc...) asparagine). Disulfide bonds link Cys-37–Cys-63, Cys-90–Cys-112, Cys-159–Cys-186, Cys-213–Cys-236, Cys-318–Cys-386, Cys-322–Cys-389, and Cys-333–Cys-437. CUB domains are found at residues 37-149 (CGGD…YSGR) and 159-273 (CGGR…YKTL). Ser-50 is subject to Phosphoserine. The tract at residues 271–321 (KTLPRGTAKEGQGPGPKRGTEPKVKLPPKSQPPEKTEESPSAPDAPTCPKQ) is disordered. The NTR domain occupies 318-437 (CPKQCRRTGT…ILTNLSKRKC (120 aa)). N-linked (GlcNAc...) asparagine glycosylation is present at Asn-431.

Interacts with EFEMP2. Post-translationally, C-terminally processed at multiple positions.

It localises to the secreted. Binds to the C-terminal propeptide of type I procollagen and enhances procollagen C-proteinase activity. In terms of biological role, C-terminal processed part of PCPE (CT-PCPE) may have an metalloproteinase inhibitory activity. This Homo sapiens (Human) protein is Procollagen C-endopeptidase enhancer 1 (PCOLCE).